Reading from the N-terminus, the 159-residue chain is Aspartate carbamoyltransferase regulatory chain (159 aa).

Residues C113, C118, C142, and C145 each coordinate Zn(2+).

Belongs to the PyrI family. In terms of assembly, contains catalytic and regulatory chains. The cofactor is Zn(2+).

In terms of biological role, involved in allosteric regulation of aspartate carbamoyltransferase. This is Aspartate carbamoyltransferase regulatory chain from Saccharolobus islandicus (strain Y.N.15.51 / Yellowstone #2) (Sulfolobus islandicus).